A 202-amino-acid chain; its full sequence is Small ribosomal subunit protein uS4 (202 aa).

Residues 22–43 (TRKSARRAYPPGQHGQNRKKRS) are disordered. Residues 90-152 (MRLDNTVFRL…APSRKLVENN (63 aa)) enclose the S4 RNA-binding domain.

This sequence belongs to the universal ribosomal protein uS4 family. As to quaternary structure, part of the 30S ribosomal subunit. Contacts protein S5. The interaction surface between S4 and S5 is involved in control of translational fidelity.

In terms of biological role, one of the primary rRNA binding proteins, it binds directly to 16S rRNA where it nucleates assembly of the body of the 30S subunit. With S5 and S12 plays an important role in translational accuracy. The polypeptide is Small ribosomal subunit protein uS4 (Trichormus variabilis (strain ATCC 29413 / PCC 7937) (Anabaena variabilis)).